The following is a 224-amino-acid chain: Ribonuclease 3 (224 aa).

Positions 4 to 127 constitute an RNase III domain; that stretch reads IEKLERSLTY…IIGAIHLEAG (124 aa). Position 40 (Glu-40) interacts with Mg(2+). Residue Asp-44 is part of the active site. Positions 113 and 116 each coordinate Mg(2+). Glu-116 is an active-site residue. The region spanning 154-223 is the DRBM domain; the sequence is DYKTKLQEIT…AKIALEKLGA (70 aa).

It belongs to the ribonuclease III family. As to quaternary structure, homodimer. Requires Mg(2+) as cofactor.

The protein resides in the cytoplasm. It catalyses the reaction Endonucleolytic cleavage to 5'-phosphomonoester.. Functionally, digests double-stranded RNA. Involved in the processing of primary rRNA transcript to yield the immediate precursors to the large and small rRNAs (23S and 16S). Processes some mRNAs, and tRNAs when they are encoded in the rRNA operon. Processes pre-crRNA and tracrRNA of type II CRISPR loci if present in the organism. This Campylobacter jejuni (strain RM1221) protein is Ribonuclease 3.